The following is a 152-amino-acid chain: Large-conductance mechanosensitive channel (152 aa).

The next 3 helical transmembrane spans lie at 21–41, 44–64, and 92–112; these read IDLA…DSLV, VVMP…NKFL, and GNFI…FWMV.

It belongs to the MscL family. In terms of assembly, homopentamer.

The protein localises to the cell inner membrane. Its function is as follows. Channel that opens in response to stretch forces in the membrane lipid bilayer. May participate in the regulation of osmotic pressure changes within the cell. This Bordetella pertussis (strain Tohama I / ATCC BAA-589 / NCTC 13251) protein is Large-conductance mechanosensitive channel.